Here is a 352-residue protein sequence, read N- to C-terminus: Selenide, water dikinase (352 aa).

Cys-21 is an active-site residue. ATP-binding positions include Lys-24 and 51-53; that span reads TND. Residue Asp-54 participates in Mg(2+) binding. ATP-binding positions include Asp-71, Asp-94, and 141–143; that span reads GHS. Mg(2+) is bound at residue Asp-94. Asp-231 lines the Mg(2+) pocket.

It belongs to the selenophosphate synthase 1 family. Class I subfamily. Homodimer. Requires Mg(2+) as cofactor.

It catalyses the reaction hydrogenselenide + ATP + H2O = selenophosphate + AMP + phosphate + 2 H(+). In terms of biological role, synthesizes selenophosphate from selenide and ATP. This Myxococcus xanthus (strain DK1622) protein is Selenide, water dikinase.